A 128-amino-acid polypeptide reads, in one-letter code: Large ribosomal subunit protein bL20 (128 aa).

Belongs to the bacterial ribosomal protein bL20 family.

In terms of biological role, binds directly to 23S ribosomal RNA and is necessary for the in vitro assembly process of the 50S ribosomal subunit. It is not involved in the protein synthesizing functions of that subunit. The sequence is that of Large ribosomal subunit protein bL20 from Corynebacterium efficiens (strain DSM 44549 / YS-314 / AJ 12310 / JCM 11189 / NBRC 100395).